The primary structure comprises 352 residues: Endophilin-A1 (352 aa).

The interval 1 to 21 (MSVAGLKKQFHKATQKVSEKV) is membrane-binding amphipathic helix. Residues 1–27 (MSVAGLKKQFHKATQKVSEKVGGAEGT) form a disordered region. The interval 1 to 125 (MSVAGLKKQF…EVGEAMRELS (125 aa)) is binds and tubulates liposomes. The BAR domain occupies 18–249 (SEKVGGAEGT…LEERIRQASS (232 aa)). The segment at 60–87 (PNPASRAKLSMINTMSKIRGQEKGPGYP) is required for dimerization upon membrane association. The stretch at 181 to 248 (EELRQALEKF…RLEERIRQAS (68 aa)) forms a coiled coil. Position 262 is a phosphoserine (Ser-262). The tract at residues 264 to 289 (EFATGDSTQPNGGLSHTGTPKPPGVQ) is disordered. Over residues 268–281 (GDSTQPNGGLSHTG) the composition is skewed to polar residues. Residues 290 to 349 (MDQPCCRALYDFEPENEGELGFKEGDIITLTNQIDENWYEGMLHGQSGFFPINYVEILVA) form the SH3 domain. The residue at position 299 (Tyr-299) is a Phosphotyrosine.

The protein belongs to the endophilin family. Monomer; in cytoplasm. Homodimer; when associated with membranes. Interacts with SYNJ1. Interacts with DNM1. Interacts with MAP4K3; the interaction appears to regulate MAP4K3-mediated JNK activation. Interacts with OPHN1. Interacts with PDCD6IP. Interacts with BIN2. Interacts with ATXN2. Interacts with ADAM9 and ADAM15 cytoplasmic tails. Interacts with TMEM108. Interacts with ADGRB2.

Its subcellular location is the cytoplasm. It is found in the membrane. The protein localises to the early endosome. It localises to the presynapse. Implicated in synaptic vesicle endocytosis. May recruit other proteins to membranes with high curvature. Required for BDNF-dependent dendrite outgrowth. Cooperates with SH3GL2 to mediate BDNF-NTRK2 early endocytic trafficking and signaling from early endosomes. In Mus musculus (Mouse), this protein is Endophilin-A1 (Sh3gl2).